The chain runs to 119 residues: Dihydroneopterin aldolase (119 aa).

Substrate-binding positions include Glu-21, Tyr-53, and 72 to 73; that span reads VE. Lys-98 (proton donor/acceptor) is an active-site residue.

It belongs to the DHNA family.

The catalysed reaction is 7,8-dihydroneopterin = 6-hydroxymethyl-7,8-dihydropterin + glycolaldehyde. The protein operates within cofactor biosynthesis; tetrahydrofolate biosynthesis; 2-amino-4-hydroxy-6-hydroxymethyl-7,8-dihydropteridine diphosphate from 7,8-dihydroneopterin triphosphate: step 3/4. Functionally, catalyzes the conversion of 7,8-dihydroneopterin to 6-hydroxymethyl-7,8-dihydropterin. This chain is Dihydroneopterin aldolase (folB), found in Streptomyces coelicolor (strain ATCC BAA-471 / A3(2) / M145).